The chain runs to 170 residues: Adenine phosphoribosyltransferase (170 aa).

This sequence belongs to the purine/pyrimidine phosphoribosyltransferase family. Homodimer.

The protein localises to the cytoplasm. It catalyses the reaction AMP + diphosphate = 5-phospho-alpha-D-ribose 1-diphosphate + adenine. The protein operates within purine metabolism; AMP biosynthesis via salvage pathway; AMP from adenine: step 1/1. Catalyzes a salvage reaction resulting in the formation of AMP, that is energically less costly than de novo synthesis. This Lysinibacillus sphaericus (strain C3-41) protein is Adenine phosphoribosyltransferase.